A 229-amino-acid polypeptide reads, in one-letter code: Trypsin (229 aa).

Positions 1 to 7 (APDDDDK) are cleaved as a propeptide — activation peptide. In terms of domain architecture, Peptidase S1 spans 8-227 (IVGGYECPKH…YVSWIHETIA (220 aa)). Cystine bridges form between C14–C143, C32–C48, C116–C216, C123–C189, C154–C168, and C179–C203. The Charge relay system role is filled by H47. E59 and E69 together coordinate Ca(2+). D91 serves as the catalytic Charge relay system. Residue S183 is the Charge relay system of the active site.

The protein belongs to the peptidase S1 family. The cofactor is Ca(2+).

The protein localises to the secreted. Its subcellular location is the extracellular space. The catalysed reaction is Preferential cleavage: Arg-|-Xaa, Lys-|-Xaa.. This Squalus acanthias (Spiny dogfish) protein is Trypsin.